The following is a 502-amino-acid chain: Histidine--tRNA ligase (502 aa).

This sequence belongs to the class-II aminoacyl-tRNA synthetase family. As to quaternary structure, homodimer.

Its subcellular location is the cytoplasm. The catalysed reaction is tRNA(His) + L-histidine + ATP = L-histidyl-tRNA(His) + AMP + diphosphate + H(+). The polypeptide is Histidine--tRNA ligase (hisS) (Brucella suis biovar 1 (strain 1330)).